Reading from the N-terminus, the 299-residue chain is Centriolar and ciliogenesis-associated protein HYLS1 (299 aa).

Serine 179 is subject to Phosphoserine.

It belongs to the HYLS1 family.

It is found in the cytoplasm. It localises to the cell projection. The protein localises to the cilium. Its subcellular location is the cytoskeleton. The protein resides in the microtubule organizing center. It is found in the centrosome. It localises to the centriole. Its function is as follows. Plays a role in ciliogenesis. The chain is Centriolar and ciliogenesis-associated protein HYLS1 from Homo sapiens (Human).